The following is a 174-amino-acid chain: Isomerase prhC (174 aa).

This sequence belongs to the trt14 isomerase family. As to quaternary structure, homodimer.

The protein operates within secondary metabolite biosynthesis; terpenoid biosynthesis. Its function is as follows. Isomerase; part of the gene cluster that mediates the biosynthesis of paraherquonin, a meroterpenoid with a unique, highly congested hexacyclic molecular architecture. The first step of the pathway is the synthesis of 3,5-dimethylorsellinic acid (DMOA) by the polyketide synthase prhL. Synthesis of DMOA is followed by farnesylation by the prenyltransferase prhE, methylesterification by the methyl-transferase prhM, epoxidation of the prenyl chain by the flavin-dependent monooxygenase prhF, and cyclization of the farnesyl moiety by the terpene cyclase prhH, to yield the tetracyclic intermediate, protoaustinoid A. The short chain dehydrogenase prhI then oxidizes the C-3 alcohol group of the terpene cyclase product to transform protoaustinoid A into protoaustinoid B. The FAD-binding monooxygenase prhJ catalyzes the oxidation of protoaustinoid B into preaustinoid A which is further oxidized into preaustinoid A1 by FAD-binding monooxygenase phrK. Finally, prhA leads to berkeleydione via the berkeleyone B intermediate. PrhA is a multifunctional dioxygenase that first desaturates at C5-C6 to form berkeleyone B, followed by rearrangement of the A/B-ring to form the cycloheptadiene moiety in berkeleydione. Berkeleydione serves as the key intermediate for the biosynthesis of paraherquonin as well as many other meroterpenoids. The cytochrome P450 monooxygenases prhB, prhD, and prhN, as well as the isomerase prhC, are probably involved in the late stage of paraherquonin biosynthesis, after the production of berkeleydione. Especially prhC might be a multifunctional enzyme that catalyzes the D-ring expansion via intramolecular methoxy rearrangement, as well as the hydrolysis of the expanded D-ring. The sequence is that of Isomerase prhC from Penicillium brasilianum.